The chain runs to 229 residues: Large ribosomal subunit protein uL1 (229 aa).

It belongs to the universal ribosomal protein uL1 family. Part of the 50S ribosomal subunit.

In terms of biological role, binds directly to 23S rRNA. The L1 stalk is quite mobile in the ribosome, and is involved in E site tRNA release. Functionally, protein L1 is also a translational repressor protein, it controls the translation of the L11 operon by binding to its mRNA. The protein is Large ribosomal subunit protein uL1 of Staphylococcus aureus (strain MRSA252).